The following is a 96-amino-acid chain: RxLR effector protein PITG_11507 (96 aa).

A signal peptide spans 1–19 (MRLSFIIVAVSLLAGGSGA). Residues 27–59 (SDVLTSRGTNEGARTGKRSLRYDSNVERTGEED) form a disordered region. The RxLR-dEER motif lies at 44 to 59 (RSLRYDSNVERTGEED). The segment covering 46 to 55 (LRYDSNVERT) has biased composition (basic and acidic residues).

Belongs to the RxLR effector family.

It is found in the secreted. The protein resides in the host nucleus. The protein localises to the host cytoplasm. Effector that enhances P.infestans colonization of Nicotiana benthamiana leaves. This chain is RxLR effector protein PITG_11507, found in Phytophthora infestans (strain T30-4) (Potato late blight agent).